We begin with the raw amino-acid sequence, 1019 residues long: Probable inorganic carbon transporter subunit DabA 1 (1019 aa).

2 residues coordinate Zn(2+): C491 and D493. A disordered region spans residues 624-643 (VPTRLHSPRDEGSAAGGEGQ). 2 residues coordinate Zn(2+): H676 and C691.

Belongs to the inorganic carbon transporter (TC 9.A.2) DabA family. Forms a complex with DabB. The cofactor is Zn(2+).

The protein resides in the cell inner membrane. In terms of biological role, part of an energy-coupled inorganic carbon pump. The polypeptide is Probable inorganic carbon transporter subunit DabA 1 (Sorangium cellulosum (strain So ce56) (Polyangium cellulosum (strain So ce56))).